Reading from the N-terminus, the 311-residue chain is Ribosomal RNA small subunit methyltransferase H (311 aa).

S-adenosyl-L-methionine is bound by residues 32-34 (AGH), Asp-52, Phe-79, Asp-100, and Gln-107.

It belongs to the methyltransferase superfamily. RsmH family.

The protein resides in the cytoplasm. It carries out the reaction cytidine(1402) in 16S rRNA + S-adenosyl-L-methionine = N(4)-methylcytidine(1402) in 16S rRNA + S-adenosyl-L-homocysteine + H(+). In terms of biological role, specifically methylates the N4 position of cytidine in position 1402 (C1402) of 16S rRNA. The chain is Ribosomal RNA small subunit methyltransferase H from Staphylococcus aureus (strain Mu3 / ATCC 700698).